Consider the following 413-residue polypeptide: Phosphoribosylamine--glycine ligase (413 aa).

The ATP-grasp domain maps to 108–310 (KQLMDKYRIP…LMQLIIDLEN (203 aa)). 134-190 (VETCDLPIVIKKDGLAAGKGVIIAFTREDALDGVKKIYQEEKGKVVFESYLEGEEFS) lines the ATP pocket. E280 and N282 together coordinate Mg(2+).

Belongs to the GARS family. Requires Mg(2+) as cofactor. Mn(2+) is required as a cofactor.

The enzyme catalyses 5-phospho-beta-D-ribosylamine + glycine + ATP = N(1)-(5-phospho-beta-D-ribosyl)glycinamide + ADP + phosphate + H(+). It participates in purine metabolism; IMP biosynthesis via de novo pathway; N(1)-(5-phospho-D-ribosyl)glycinamide from 5-phospho-alpha-D-ribose 1-diphosphate: step 2/2. The polypeptide is Phosphoribosylamine--glycine ligase (Staphylococcus epidermidis (strain ATCC 12228 / FDA PCI 1200)).